The sequence spans 96 residues: Acylphosphatase (96 aa).

The 86-residue stretch at 11-96 folds into the Acylphosphatase-like domain; sequence ARRWYVRGRV…ITSYDSFRIR (86 aa). Catalysis depends on residues arginine 26 and asparagine 44.

The protein belongs to the acylphosphatase family.

It carries out the reaction an acyl phosphate + H2O = a carboxylate + phosphate + H(+). The chain is Acylphosphatase (acyP) from Solibacter usitatus (strain Ellin6076).